The primary structure comprises 503 residues: Maturase K (503 aa).

Belongs to the intron maturase 2 family. MatK subfamily.

It localises to the plastid. Its subcellular location is the chloroplast. Its function is as follows. Usually encoded in the trnK tRNA gene intron. Probably assists in splicing its own and other chloroplast group II introns. The polypeptide is Maturase K (Eucalyptus globulus (Tasmanian blue gum)).